The sequence spans 630 residues: FAST kinase domain-containing protein 4 (630 aa).

The RAP domain occupies 560–618; that stretch reads IAFLRWEFPNFNSRSKDLLGRFVLARRHVLAAGFLVVDVPYYEWLDLKSEWQKSAYLKD.

This sequence belongs to the FAST kinase family. Expression detected in spleen, testis, colon, heart, smooth muscle, kidney, brain, lung, liver, brown and white adipose tissue with highest expression in testis, heart, smooth muscle and brown adipose tissue.

It is found in the mitochondrion matrix. Functionally, plays a role in processing of mitochondrial RNA precursors and in stabilization of a subset of mature mitochondrial RNA species, such as MT-CO1, MT-CO2, MT-CYB, MT-CO3, MT-ND3, MT-ND5 and MT-ATP8/6. May play a role in cell cycle progression. This chain is FAST kinase domain-containing protein 4 (Tbrg4), found in Mus musculus (Mouse).